The chain runs to 249 residues: Aliphatic sulfonates import ATP-binding protein SsuB 2 (249 aa).

An ABC transporter domain is found at 5 to 233 (LDLLEIRKAY…PRDRRAVELA (229 aa)). 37-44 (GPSGCGKS) lines the ATP pocket.

Belongs to the ABC transporter superfamily. Aliphatic sulfonates importer (TC 3.A.1.17.2) family. The complex is composed of two ATP-binding proteins (SsuB), two transmembrane proteins (SsuC) and a solute-binding protein (SsuA).

It localises to the cell inner membrane. The enzyme catalyses ATP + H2O + aliphatic sulfonate-[sulfonate-binding protein]Side 1 = ADP + phosphate + aliphatic sulfonateSide 2 + [sulfonate-binding protein]Side 1.. Functionally, part of the ABC transporter complex SsuABC involved in aliphatic sulfonates import. Responsible for energy coupling to the transport system. This Pseudomonas aeruginosa (strain ATCC 15692 / DSM 22644 / CIP 104116 / JCM 14847 / LMG 12228 / 1C / PRS 101 / PAO1) protein is Aliphatic sulfonates import ATP-binding protein SsuB 2.